The primary structure comprises 415 residues: MNEVLAKGKRAKEVAMNLVLKSTSQKNEALAAIAERLIVETAYILEENKRGIEEGKAKGFSDSLLDRLMLTEQRIVDMTEGIKQLIELRDPVGECVSAWERPNGLSIQEMRVPLGVVGMIYEARPNVTVDAATICLKTGNAVILRGSSSAIHSNKAIVAVIHRALKQTSLPQESVQLIEDTTRDSAKQLFTMNDYLDVLIPRGGKQLIDTVVREASVPVLETGAGNCHVFIDETADKQMAFDIIINAKTQRPSVCNAIETIVLHEKWAEQYGSELFSSLKKRGVELRGDQKALAMDSSIVLASEEDWWTEFLSLTLAVKLVSSIEEAIHHINTYGSMHSEAIISENEENVSKFFVSVDAAALYHNASTRFTDGSEFGFGAEIGISTQKLHVRGPMGLPALTSTKYVIRGNGQIRK.

The protein belongs to the gamma-glutamyl phosphate reductase family.

Its subcellular location is the cytoplasm. The catalysed reaction is L-glutamate 5-semialdehyde + phosphate + NADP(+) = L-glutamyl 5-phosphate + NADPH + H(+). It participates in amino-acid biosynthesis; L-proline biosynthesis; L-glutamate 5-semialdehyde from L-glutamate: step 2/2. Catalyzes the NADPH-dependent reduction of L-glutamate 5-phosphate into L-glutamate 5-semialdehyde and phosphate. The product spontaneously undergoes cyclization to form 1-pyrroline-5-carboxylate. The chain is Gamma-glutamyl phosphate reductase from Bacillus cereus (strain 03BB102).